An 84-amino-acid chain; its full sequence is MAGTTGERPFSDIITSVRYWVIHSITIPALFIAGWLFVSTGLAYDVFGTPRPDSYYAQEQRSIPLVTDRFEAKQQVETFLEQLK.

Topologically, residues 2–20 (AGTTGERPFSDIITSVRYW) are cytoplasmic. Residues 21 to 35 (VIHSITIPALFIAGW) form a helical membrane-spanning segment. Position 23 (histidine 23) interacts with heme. At 36–84 (LFVSTGLAYDVFGTPRPDSYYAQEQRSIPLVTDRFEAKQQVETFLEQLK) the chain is on the lumenal side.

Belongs to the PsbE/PsbF family. Heterodimer of an alpha subunit and a beta subunit. PSII is composed of 1 copy each of membrane proteins PsbA, PsbB, PsbC, PsbD, PsbE, PsbF, PsbH, PsbI, PsbJ, PsbK, PsbL, PsbM, PsbT, PsbX, PsbY, PsbZ, Psb30/Ycf12, peripheral proteins PsbO, CyanoQ (PsbQ), PsbU, PsbV and a large number of cofactors. It forms dimeric complexes. Heme b serves as cofactor.

Its subcellular location is the cellular thylakoid membrane. This b-type cytochrome is tightly associated with the reaction center of photosystem II (PSII). PSII is a light-driven water:plastoquinone oxidoreductase that uses light energy to abstract electrons from H(2)O, generating O(2) and a proton gradient subsequently used for ATP formation. It consists of a core antenna complex that captures photons, and an electron transfer chain that converts photonic excitation into a charge separation. In Thermostichus vulcanus (Synechococcus vulcanus), this protein is Cytochrome b559 subunit alpha.